A 663-amino-acid polypeptide reads, in one-letter code: MSDLFSFNNKEKKNKIIYTNYSAKDIEVLDGLEPVRKRPGMYIGGTDSNAMHHLVSEVLDNAMDEAVAGFASIIMIKMHQDHSITIFDNGRGIPIDNHPKFPNKSALEVILTTLHSGSKFSNNVYHTAGGLHGVGISVVNALSKHLKIEVYQQGKLYSQSYSKGEKLTDLISTEVSKRLRGTSINFTPDPEIFSETLHFNPKKIYEIARSKAYLYRGVSIEWECEVEVPSDIPKKALINFPNGLKDYLSSKISLDNLVIPEIFSGNIESTMDAIKLEWAICWQNNDTSAFMKSYCNTVPTPQGGTHEQGLKSAILRGLKAYSEMIGNKKSANLTIEDIFETASVVLSVFIVEPSFQGQTKEKLVSNGVSKLVENIIKDHFDHFLSSDKVLATHLLEHVIAISEFRRNKKNERNISRKNATQKLRLPGKLADCTRTSAEGTELFIVEGDSAGGSAKQARNRETQAVLPLWGKVLNVASSTLEKIINNQAIQDLEIALACGSLKNYKKENLRYEKIIIMTDADVDGAHIASLLMTFFFLRMPQLVKEGHLYLAKPPLYRLTQSNKIYYACDEEEKIKLTYKLSKTSKAKIEVGRFKGLGEMMPAQLKETTMHPEKRSLLKVTLEDVQNVDKIVDDLMGKKPEKRFQFIYEQALVKMDQIINKLDI.

ATP contacts are provided by residues Tyr-21, Asn-61, Asp-88, 130-136, and Lys-360; that span reads GLHGVGI. The Toprim domain occupies 440-554; the sequence is TELFIVEGDS…EGHLYLAKPP (115 aa). Mg(2+) is bound by residues Glu-446, Asp-519, and Asp-521.

The protein belongs to the type II topoisomerase family. ParE type 1 subfamily. As to quaternary structure, heterotetramer composed of ParC and ParE. The cofactor is Mg(2+). Mn(2+) is required as a cofactor. Requires Ca(2+) as cofactor.

The enzyme catalyses ATP-dependent breakage, passage and rejoining of double-stranded DNA.. Functionally, topoisomerase IV is essential for chromosome segregation. It relaxes supercoiled DNA. Performs the decatenation events required during the replication of a circular DNA molecule. This Rickettsia typhi (strain ATCC VR-144 / Wilmington) protein is DNA topoisomerase 4 subunit B.